A 647-amino-acid polypeptide reads, in one-letter code: Protein cueball (647 aa).

Residues 1 to 22 (MLWCPSVLVPLIAVAACLPVLA) form the signal peptide. Topologically, residues 23-534 (IGTPLEWEFA…CMTPSPWTSN (512 aa)) are extracellular. N-linked (GlcNAc...) asparagine glycosylation is found at N80 and N106. LDL-receptor class B repeat units lie at residues 119 to 166 (RNLF…DVCR), 167 to 211 (RKLY…DQLS), and 212 to 257 (DRIF…TNDA). N-linked (GlcNAc...) asparagine glycosylation occurs at N175. N316 carries N-linked (GlcNAc...) asparagine glycosylation. EGF-like domains lie at 365–401 (DEKTAQLERDHCLNGGTYIADRVLCICPTGFKGSRCE) and 436–473 (EISKCSGLCLNGGHCKLEDISEKPSCECPHNFAGERCE). Intrachain disulfides connect C376–C389, C391–C400, C440–C450, C444–C461, and C463–C472. N-linked (GlcNAc...) asparagine glycosylation occurs at N475. The chain crosses the membrane as a helical span at residues 535-555 (VIIVLVLGIVSCFFLVAVIVH). Residues 556–647 (GFRRLYKPKR…LIHNMDDDLY (92 aa)) lie on the Cytoplasmic side of the membrane.

The protein belongs to the cueball family.

Its subcellular location is the cell membrane. Its function is as follows. Has a role in spermatogenesis and oogenesis. The polypeptide is Protein cueball (Drosophila pseudoobscura pseudoobscura (Fruit fly)).